Consider the following 173-residue polypeptide: Mediator of RNA polymerase II transcription subunit 10 (173 aa).

The span at 1-10 (MVQQQQQSQQ) shows a compositional bias: low complexity. The interval 1 to 42 (MVQQQQQSQQRMMELHERNDREKLARKTEKEREEERRKQEDD) is disordered. The span at 13–42 (MELHERNDREKLARKTEKEREEERRKQEDD) shows a compositional bias: basic and acidic residues.

It belongs to the Mediator complex subunit 10 family. As to quaternary structure, component of the Mediator complex.

Its subcellular location is the nucleus. Component of the Mediator complex, a coactivator involved in the regulated transcription of nearly all RNA polymerase II-dependent genes. Mediator functions as a bridge to convey information from gene-specific regulatory proteins to the basal RNA polymerase II transcription machinery. Mediator is recruited to promoters by direct interactions with regulatory proteins and serves as a scaffold for the assembly of a functional preinitiation complex with RNA polymerase II and the general transcription factors. Required for germ cell development and for transcriptional activation of certain stage-specific inducible promoters. In Caenorhabditis elegans, this protein is Mediator of RNA polymerase II transcription subunit 10 (mdt-10).